The sequence spans 561 residues: Tectonic-like complex member MKS1 (561 aa).

Positions 314 to 442 (LRLFVNGEVV…TASTWRPMEL (129 aa)) constitute a C2 B9-type domain.

As to quaternary structure, part of the tectonic-like complex (also named B9 complex). Interacts with TMEM107. Interacts with TCTN3, AHI1, TCTN1, TCTN2, CC2D2A. Interacts with FLNA. Interacts with TMEM67. Interacts with B9D1 and B9D2.

The protein resides in the cytoplasm. It is found in the cytoskeleton. The protein localises to the cilium basal body. It localises to the microtubule organizing center. Its subcellular location is the centrosome. In terms of biological role, component of the tectonic-like complex, a complex localized at the transition zone of primary cilia and acting as a barrier that prevents diffusion of transmembrane proteins between the cilia and plasma membranes. Involved in centrosome migration to the apical cell surface during early ciliogenesis. Required for ciliary structure and function, including a role in regulating length and appropriate number through modulating centrosome duplication. Required for cell branching morphology. In Rattus norvegicus (Rat), this protein is Tectonic-like complex member MKS1 (Mks1).